A 534-amino-acid chain; its full sequence is Sodium-dependent lysophosphatidylcholine symporter 1 (534 aa).

Residues 1–39 are Cytoplasmic-facing; sequence MAKGEGAESGSAAGLLPTSILQASERPVQVKKEPKKKQQ. Residues 40 to 69 form a helical membrane-spanning segment; sequence LSICNKLCYAVGGAPYQLTGCALGFFLQIY. Topologically, residues 70–80 are extracellular; it reads LLDVAKVEPLP. Residues 81–101 traverse the membrane as a helical segment; the sequence is ASIILFVGRAWDAFTDPLVGF. The Cytoplasmic segment spans residues 102–113; sequence CISKSSWTRLGR. A helical transmembrane segment spans residues 114–133; it reads LMPWIIFSTPLAIIAYFLIW. Residues 134 to 148 are Extracellular-facing; that stretch reads FVPDFPSGTESSHGF. The chain crosses the membrane as a helical span at residues 149 to 173; that stretch reads LWYLLFYCLFETLVTCFHVPYSALT. Residues 174-180 are Cytoplasmic-facing; that stretch reads MFISTEQ. The chain crosses the membrane as a helical span at residues 181–212; sequence SERDSATAYRMTVEVLGTVIGTAIQGQIVGQA. The Extracellular portion of the chain corresponds to 213–232; the sequence is KAPCLQDQNGSVVVSEVANR. A disulfide bridge links cysteine 216 with cysteine 464. N-linked (GlcNAc...) asparagine glycans are attached at residues asparagine 221 and asparagine 231. Residues 233 to 266 form a helical membrane-spanning segment; that stretch reads TQSTASLKDTQNAYLLAAGIIASIYVLCAFILIL. Topologically, residues 267 to 297 are cytoplasmic; it reads GVREQRELYESQQAESMPFFQGLRLVMGHGP. Residues 298–324 traverse the membrane as a helical segment; the sequence is YVKLIAGFLFTSLAFMLVEGNFALFCT. At 325-335 the chain is on the extracellular side; the sequence is YTLDFRNEFQN. The chain crosses the membrane as a helical span at residues 336–354; it reads LLLAIMLSATFTIPIWQWF. The Cytoplasmic segment spans residues 355 to 358; it reads LTRF. The helical transmembrane segment at 359–380 threads the bilayer; it reads GKKTAVYIGISSAVPFLILVAL. At 381-383 the chain is on the extracellular side; the sequence is MER. A helical transmembrane segment spans residues 384–420; it reads NLIVTYVVAVAAGVSVAAAFLLPWSMLPDVIDDFHLK. The Cytoplasmic segment spans residues 421-430; sequence HPHSPGTEPI. A helical membrane pass occupies residues 431–457; that stretch reads FFSFYVFFTKFASGVSLGVSTLSLDFA. Residues 458–469 lie on the Extracellular side of the membrane; it reads NYQRQGCSQPEQ. The chain crosses the membrane as a helical span at residues 470-493; that stretch reads VKFTLKMLVTMAPIILILLGLLLF. Residues 494-534 lie on the Cytoplasmic side of the membrane; that stretch reads KLYPIDEEKRRQNKKALQALREEASSSGCSDTDSTELASIL.

Belongs to the major facilitator superfamily. Post-translationally, N-glycosylated. As to expression, widely expressed. Exhibits an oscillatory pattern of expression in brown adipose tissue and liver consistent with a circadian rhythm. Enriched in brain micro-vessels, where it is specifically present in endothelium constituting the blood-brain barrier (at protein level).

The protein localises to the cell membrane. The protein resides in the endoplasmic reticulum membrane. The enzyme catalyses a 1-acyl-sn-glycero-3-phosphocholine(in) + Na(+)(in) = a 1-acyl-sn-glycero-3-phosphocholine(out) + Na(+)(out). The catalysed reaction is 1-(4Z,7Z,10Z,13Z,16Z,19Z-docosahexaenoyl)-sn-glycero-3-phosphocholine(in) + Na(+)(in) = 1-(4Z,7Z,10Z,13Z,16Z,19Z-docosahexaenoyl)-sn-glycero-3-phosphocholine(out) + Na(+)(out). It carries out the reaction 1-(9Z-octadecenoyl)-sn-glycero-3-phosphocholine(in) + Na(+)(in) = 1-(9Z-octadecenoyl)-sn-glycero-3-phosphocholine(out) + Na(+)(out). It catalyses the reaction 1-hexadecanoyl-sn-glycero-3-phosphocholine(in) + Na(+)(in) = 1-hexadecanoyl-sn-glycero-3-phosphocholine(out) + Na(+)(out). The enzyme catalyses a 1-acyl-sn-glycero-3-phosphoethanolamine(in) + Na(+)(in) = a 1-acyl-sn-glycero-3-phosphoethanolamine(out) + Na(+)(out). Functionally, sodium-dependent lysophosphatidylcholine (LPC) symporter, which plays an essential role for blood-brain barrier formation and function. Specifically expressed in endothelium of the blood-brain barrier of micro-vessels and transports LPC into the brain. Transport of LPC is essential because it constitutes the major mechanism by which docosahexaenoic acid (DHA), an omega-3 fatty acid that is essential for normal brain growth and cognitive function, enters the brain. Transports LPC carrying long-chain fatty acids such LPC oleate and LPC palmitate with a minimum acyl chain length of 14 carbons. Does not transport docosahexaenoic acid in unesterified fatty acid. Not required for central nervous system vascular morphogenesis. This chain is Sodium-dependent lysophosphatidylcholine symporter 1, found in Mus musculus (Mouse).